Here is a 173-residue protein sequence, read N- to C-terminus: Crossover junction endodeoxyribonuclease RuvC (173 aa).

Catalysis depends on residues Asp8, Glu67, and Asp139. The Mg(2+) site is built by Asp8, Glu67, and Asp139.

It belongs to the RuvC family. As to quaternary structure, homodimer which binds Holliday junction (HJ) DNA. The HJ becomes 2-fold symmetrical on binding to RuvC with unstacked arms; it has a different conformation from HJ DNA in complex with RuvA. In the full resolvosome a probable DNA-RuvA(4)-RuvB(12)-RuvC(2) complex forms which resolves the HJ. Mg(2+) serves as cofactor.

It localises to the cytoplasm. The catalysed reaction is Endonucleolytic cleavage at a junction such as a reciprocal single-stranded crossover between two homologous DNA duplexes (Holliday junction).. The RuvA-RuvB-RuvC complex processes Holliday junction (HJ) DNA during genetic recombination and DNA repair. Endonuclease that resolves HJ intermediates. Cleaves cruciform DNA by making single-stranded nicks across the HJ at symmetrical positions within the homologous arms, yielding a 5'-phosphate and a 3'-hydroxyl group; requires a central core of homology in the junction. The consensus cleavage sequence is 5'-(A/T)TT(C/G)-3'. Cleavage occurs on the 3'-side of the TT dinucleotide at the point of strand exchange. HJ branch migration catalyzed by RuvA-RuvB allows RuvC to scan DNA until it finds its consensus sequence, where it cleaves and resolves the cruciform DNA. The chain is Crossover junction endodeoxyribonuclease RuvC from Photorhabdus laumondii subsp. laumondii (strain DSM 15139 / CIP 105565 / TT01) (Photorhabdus luminescens subsp. laumondii).